We begin with the raw amino-acid sequence, 255 residues long: Imidazole glycerol phosphate synthase subunit HisF (255 aa).

Residues Asp12 and Asp131 contribute to the active site.

It belongs to the HisA/HisF family. As to quaternary structure, heterodimer of HisH and HisF.

The protein localises to the cytoplasm. It catalyses the reaction 5-[(5-phospho-1-deoxy-D-ribulos-1-ylimino)methylamino]-1-(5-phospho-beta-D-ribosyl)imidazole-4-carboxamide + L-glutamine = D-erythro-1-(imidazol-4-yl)glycerol 3-phosphate + 5-amino-1-(5-phospho-beta-D-ribosyl)imidazole-4-carboxamide + L-glutamate + H(+). The protein operates within amino-acid biosynthesis; L-histidine biosynthesis; L-histidine from 5-phospho-alpha-D-ribose 1-diphosphate: step 5/9. In terms of biological role, IGPS catalyzes the conversion of PRFAR and glutamine to IGP, AICAR and glutamate. The HisF subunit catalyzes the cyclization activity that produces IGP and AICAR from PRFAR using the ammonia provided by the HisH subunit. This chain is Imidazole glycerol phosphate synthase subunit HisF, found in Salinispora tropica (strain ATCC BAA-916 / DSM 44818 / JCM 13857 / NBRC 105044 / CNB-440).